The sequence spans 333 residues: Protein-methionine-sulfoxide reductase catalytic subunit MsrP (333 aa).

A signal peptide (tat-type signal) is located at residues 1–43; sequence MHKHRKPTEADVTPESLFYQRRRVLKALGISAAALSLPLSAQA. Residues Asn-87, 90–91, Cys-145, Thr-180, Asn-232, Arg-237, and 248–250 each bind Mo-molybdopterin; these read YE and NIK.

The protein belongs to the MsrP family. As to quaternary structure, heterodimer of a catalytic subunit (MsrP) and a heme-binding subunit (MsrQ). Mo-molybdopterin serves as cofactor. Post-translationally, predicted to be exported by the Tat system. The position of the signal peptide cleavage has not been experimentally proven.

The protein localises to the periplasm. It carries out the reaction L-methionyl-[protein] + a quinone + H2O = L-methionyl-(S)-S-oxide-[protein] + a quinol. The enzyme catalyses L-methionyl-[protein] + a quinone + H2O = L-methionyl-(R)-S-oxide-[protein] + a quinol. Part of the MsrPQ system that repairs oxidized periplasmic proteins containing methionine sulfoxide residues (Met-O), using respiratory chain electrons. Thus protects these proteins from oxidative-stress damage caused by reactive species of oxygen and chlorine generated by the host defense mechanisms. MsrPQ is essential for the maintenance of envelope integrity under bleach stress, rescuing a wide series of structurally unrelated periplasmic proteins from methionine oxidation. The catalytic subunit MsrP is non-stereospecific, being able to reduce both (R-) and (S-) diastereoisomers of methionine sulfoxide. The polypeptide is Protein-methionine-sulfoxide reductase catalytic subunit MsrP (Pectobacterium atrosepticum (strain SCRI 1043 / ATCC BAA-672) (Erwinia carotovora subsp. atroseptica)).